The following is a 537-amino-acid chain: MARLLKAVTVCALAGIAHAFNYDQPYRGQYHFSPQKNWMNDPNGLLYHNGTYHLFFQYNPGGIEWGNISWGHATSEDLTHWEEQPVALLARGYGSDVTEMYFSGSAVADVNNTSGFGKDGKTPLVAMYTSYYPVAQTLPSGQTVQEDQQSQSIAYSLDDGLTWTTYDAANPVIPNPPQPYQAQYQNFRDPFVFWHDESHKWVVVTSIAELHKLAIYTSDNLKDWKLVSEFGPYNAQGGVWECPGLFKLPLDGGSSTKWVITSGLNPGGPPGTVGSGTQYFVGEFDGTTFTPDADTVYPGNSTANWMDWGPDFYAAAGYNGLSIKDHVHIGWMNNWQYGANIPTYPWRSAMAIPRHLALKTINNKTTLVQQPQEAWSSISSKHPLYSRTYSTFSEGSTNASTTGETFRVDLSFSATSKASTFAIALRASANFTEQTLAGYDFAKQQIFLDRTKSGDVSFDNTFASVYHGPLVPDSTGMVRLSIFVDRSSVEVFGGQGETTLTAQIFPSNDAVHARLVSTGGATEDVRVDVHNITSTWN.

The first 19 residues, 1-19 (MARLLKAVTVCALAGIAHA), serve as a signal peptide directing secretion. Aspartate 41 is a catalytic residue. N-linked (GlcNAc...) asparagine glycans are attached at residues asparagine 49, asparagine 67, asparagine 112, asparagine 300, asparagine 363, asparagine 398, asparagine 430, and asparagine 531.

This sequence belongs to the glycosyl hydrolase 32 family.

It localises to the secreted. It carries out the reaction Hydrolysis of terminal, non-reducing (2-&gt;1)- and (2-&gt;6)-linked beta-D-fructofuranose residues in fructans.. With respect to regulation, the catalytic activity is increased by manganese cathions, but strongly inhibited by other metal ions such as copper, aluminum, silver, iron, nickel, zinc and magnesium cathions. Functionally, exo-inulinase involved in utilization of the plant storage polymer inulin, consisting of fructooligosaccharides with a degree of polymerization (DP) value from 2 to 60. Splits off terminal fructose units successively from the non-reducing end of the inulin molecule, and also hydrolyze sucrose and raffinose. The polypeptide is Extracellular exo-inulinase inuE (exoI) (Aspergillus ficuum).